Consider the following 360-residue polypeptide: UDP-N-acetylglucosamine--N-acetylmuramyl-(pentapeptide) pyrophosphoryl-undecaprenol N-acetylglucosamine transferase (360 aa).

UDP-N-acetyl-alpha-D-glucosamine contacts are provided by residues 12 to 14 (TAG), Ser-198, and Gln-289.

It belongs to the glycosyltransferase 28 family. MurG subfamily.

It is found in the cell membrane. It catalyses the reaction Mur2Ac(oyl-L-Ala-gamma-D-Glu-L-Lys-D-Ala-D-Ala)-di-trans,octa-cis-undecaprenyl diphosphate + UDP-N-acetyl-alpha-D-glucosamine = beta-D-GlcNAc-(1-&gt;4)-Mur2Ac(oyl-L-Ala-gamma-D-Glu-L-Lys-D-Ala-D-Ala)-di-trans,octa-cis-undecaprenyl diphosphate + UDP + H(+). It participates in cell wall biogenesis; peptidoglycan biosynthesis. In terms of biological role, cell wall formation. Catalyzes the transfer of a GlcNAc subunit on undecaprenyl-pyrophosphoryl-MurNAc-pentapeptide (lipid intermediate I) to form undecaprenyl-pyrophosphoryl-MurNAc-(pentapeptide)GlcNAc (lipid intermediate II). In Streptococcus equi subsp. zooepidemicus (strain MGCS10565), this protein is UDP-N-acetylglucosamine--N-acetylmuramyl-(pentapeptide) pyrophosphoryl-undecaprenol N-acetylglucosamine transferase.